Here is a 420-residue protein sequence, read N- to C-terminus: Zinc finger protein 362 (420 aa).

Disordered regions lie at residues 1 to 28, 54 to 80, and 115 to 155; these read MSRSSPSGKGHSRMAEPRFNNPYFWPPP, RPPHLPPTSASSQQPLLVPPAPAESSQ, and VTGL…SQSR. Over residues 121-154 the composition is skewed to low complexity; the sequence is STRTPSVSTSESSAGAGTGTGTSTPSTPTTTSQS. Position 162 is a phosphothreonine (Thr162). Positions 178–202 are disordered; the sequence is TIQGHGLLGPPKSERGRKKIKAENP. Lys198 participates in a covalent cross-link: Glycyl lysine isopeptide (Lys-Gly) (interchain with G-Cter in SUMO2). 6 C2H2-type zinc fingers span residues 227–249, 255–277, 283–305, 311–335, 341–363, and 371–393; these read YRCKVCPLTFFTKSEMQIHSKSH, HKCPHCSKSFANASYLAQHLRIH, YHCSYCDKSFRQLSHLQQHTRIH, YKCPHPGCEKAFTQLSNLQSHQRQH, YKCPNCYRAYSDSASLQIHLSAH, and YCCSMCGRAYTSETYLMKHMSKH. Residue Ser404 is modified to Phosphoserine.

It belongs to the krueppel C2H2-type zinc-finger protein family.

The protein localises to the nucleus. In terms of biological role, may be involved in transcriptional regulation. This chain is Zinc finger protein 362 (ZNF362), found in Homo sapiens (Human).